The sequence spans 291 residues: MKRIVLFLLTNFAVILVLSISARLLGVDRFLTSNGLNMGMLLAFAALIGFGGSFISLMMSKTMAKWSTGARVIERPGNQDEAWLMDTVRQLSKKAGFPMPEVAVFDGAPNAFATGPSKSKSLVAVSTGLLQSMNRKEVEAVLAHEVAHIQNGDMVTLTLIQGVVNTFVIFLARALAYVVDNFLRGDEKESSGPGIGYWVSSIAFEIMFGILASIVVMFFSRKREYRADAGAAALMGERRSMIDALRVLGGLEAGALPKEMAASGIAGGGMMALFSSHPPIEARIAALESAR.

The next 2 helical transmembrane spans lie at 4 to 24 and 38 to 58; these read IVLFLLTNFAVILVLSISARL and MGMLLAFAALIGFGGSFISLM. Zn(2+) is bound at residue His144. The active site involves Glu145. Position 148 (His148) interacts with Zn(2+). Transmembrane regions (helical) follow at residues 152–172 and 199–219; these read GDMVTLTLIQGVVNTFVIFLA and VSSIAFEIMFGILASIVVMFF. Position 224 (Glu224) interacts with Zn(2+).

Belongs to the peptidase M48B family. It depends on Zn(2+) as a cofactor.

Its subcellular location is the cell inner membrane. In Prosthecochloris aestuarii (strain DSM 271 / SK 413), this protein is Protease HtpX homolog.